The following is a 210-amino-acid chain: Ras-related protein Rab-8 (210 aa).

Residue 15–22 coordinates GTP; it reads GDSGVGKT. The Effector region motif lies at 37-45; it reads FISTIGIDF. Residues 63 to 67 and 121 to 124 each bind GTP; these read DTAGQ and NKCD. Cys-207 carries the post-translational modification Cysteine methyl ester. Residue Cys-207 is the site of S-geranylgeranyl cysteine attachment. Positions 208–210 are cleaved as a propeptide — removed in mature form; it reads SLL.

The protein belongs to the small GTPase superfamily. Rab family.

Its subcellular location is the cell membrane. This chain is Ras-related protein Rab-8, found in Diplobatis ommata (Ocellated electric ray).